The primary structure comprises 551 residues: Putative ABC transporter ATP-binding protein BT9727_3105 (551 aa).

ABC transporter domains are found at residues 5–243 (AEIN…FRPF) and 293–525 (LSAE…SINR). ATP-binding positions include 39–46 (GGSGSGKT) and 327–334 (GKNGTGKS).

It belongs to the ABC transporter superfamily.

It localises to the cell membrane. In terms of biological role, probably part of an ABC transporter complex. Responsible for energy coupling to the transport system. This is Putative ABC transporter ATP-binding protein BT9727_3105 from Bacillus thuringiensis subsp. konkukian (strain 97-27).